The chain runs to 381 residues: Beta-lactamase CMY-4 (381 aa).

The first 20 residues, Met1–Ala20, serve as a signal peptide directing secretion. The active-site Acyl-ester intermediate is Ser84. Residues Ser84, Gln140, Tyr170, and Asn172 each contribute to the a beta-lactam site.

The protein belongs to the class-C beta-lactamase family.

The enzyme catalyses a beta-lactam + H2O = a substituted beta-amino acid. Its function is as follows. Class C beta-lactamase which confers resistance to penicillins and cephalosporins. The chain is Beta-lactamase CMY-4 from Klebsiella pneumoniae.